The primary structure comprises 242 residues: HTH-type transcriptional regulator GadW (242 aa).

An HTH araC/xylS-type domain is found at 139–236 (GKVERLISFD…GVTPHQFSQH (98 aa)). 2 DNA-binding regions (H-T-H motif) span residues 156–177 (RDIAERMYTSESLIKKKLQDEN) and 203–226 (LHTIAEKCGYSSTSYFINTFRQYY).

As to quaternary structure, homodimer.

Its function is as follows. Depending on the conditions (growth phase and medium), acts as a positive or negative regulator of gadA and gadBC. Repression occurs directly or via the repression of the expression of gadX. Activation occurs directly by the binding of GadW to the gadA and gadBC promoters. The sequence is that of HTH-type transcriptional regulator GadW (gadW) from Escherichia coli O6:H1 (strain CFT073 / ATCC 700928 / UPEC).